The following is a 130-amino-acid chain: Large ribosomal subunit protein bL17 (130 aa).

Belongs to the bacterial ribosomal protein bL17 family. Part of the 50S ribosomal subunit. Contacts protein L32.

The chain is Large ribosomal subunit protein bL17 from Delftia acidovorans (strain DSM 14801 / SPH-1).